The chain runs to 2497 residues: MEKVHVDIEEDSPFLRALQRSFPQFEVEAKQVTDNDHANARAFSHLASKLIETEVEPSDTILDIGSAPARRMYSKHKYHCICPMKCAEDPDRLFKYAAKLKKNCKDITDKELDKKMKELAEVMSDPDLETETICLHDDETCRFEGQVAVYQDVYAVDGPTSLYHQANKGVRVAYWIGFDTTPFMFKNLAGAYPSYSTNWADETVLTARNIGLCSSDVMERSRRGMSILRKKFLKPSNNVLFSVGSTIYHEKRDLLRSWHLPSVFHLRGKQNYTCRCETIVSCDGYVVKRIAISPGLYGKPSGYAATMHREGFLCCKVTDTLDGERVSFPVCTYVPATLCDQMTGILATDVSADDAQKLLVGLNQRIVVNGRTQRNTNTMKNYLLPVVAQAFARWAKEYKEDQEDERPLGLRDRQLVMGCCWAFRKHKITSVYKRPDTQTIIKVNSDFHSFVLPRIGSNTLEIGLRTRIRKLLEEPVDRPPLITADDIQEAKNAADEAKEVKEAEELRAALPPLSADVEEPALEADVDLMLQEAGAGSVETPRGLIKVTSYAGEDKIGSYAVLSPQAVLRSEKLTCIHPLAEQVIVITHSGRKGRYAVEPYHGKVVVPEGQAIPVQDFQALSESATIVYNEREFVNRYLHHIATHGGALNTDEEYYRVVKPSEHEGEYLYDIDKKQCVKKELVSGLGLTGELVDPPFHEFAYESLRTRPAAPYQVPTIGVYGVPGSGKSGIIKSAVTKKDLVVSAKKENCAEIIRDVKKMKGLDVNARTVDSVLLNGCKHPVETLYIDEAFACHAGTLRALIAIIRPKKAVLCGDPKQCGFFNMMCLKVHFNHEICTQVFHKSISRRCTKSVTSVVSTLFYDKRMRTTNPRDSKIEIDTTGSTKPKKDDLILTCFRGWVKQLQIDYKGNEIMTAAASQGLTRKGVYAVRYKVNENPLYAPTSEHVNVLLTRTEDKIVWKTLAGDPWIKTLTAKYPGDFTATMEEWQAEHDAIMRHILEKPDPTDVFQNKANVCWAKALVPVLKTAGIDLTTEQWNTVDYFKEDKAHSAEIVLNQLCVRFFGLDLDSGLFSAPTVPLSIRNNHWDNSPSPNMYGLNKEVVRQLSRRYPQLPRAVTTGRAYDMNTGTLRNYDPRINLVPVNRRLPHALVTQHADYPPSDFSAFVSKLKGRTVLVVGEKMSISGKTVDWLSETPDSTFRARLDLGIPSELPKYDIVFVNVRTQYRYHHYQQCEDHAIKLSMLTKKACLHLNPGGTCVSIGYGYADRASESIIGAVARQFKFSRVCKPKVSKEETEVLFVFIGFDRKTRTHNPYKLSSTLTNIYTGSRLHEAGCAPSYHVVRGDIATATEGVIVNAANSKGQPGSGVCGALYRKYPESFDLQPIEVGKARLVKGNSKHLIHAVGPNFNKVSEVEGDKQLAEAYESIARIINDNNYRSVAIPLLSTGIFAGNKDRLMQSLNHLLTALDTTDADVAIYCRDKKWEVTLKEVVARREAVEEICISEDSSVAEPDAELVRVHPKSSLAGRKGYSTSDGKTFSYLEGTKFHQAAKDMAEINAMWPAATEANEQVCLYILGESMSSIRSKCPVEESEASTPPSTLPCLCIHAMTPERVQRLKASRPEQITVCSSFPLPKYRITGVQKIQCSHPILFSPKVPEYIHPRKYLADAASANNEAAELTSVDVQPQLEESPENTEQLVEEEDSISVLSEAPHQVHQVEAEVHRFSASAQSSSWSIPRASDFDVESLSVLESLGANDTISMESSSNETALALRTIFRTPPIPRPRVQSTSTDVDSISALESCDSTSDARSVDSDETDVSIFDKRLEFMARPVPAPRTKFRTPPVPKPRARRPFHPLSSRSSSRSSLASNPPGVNRVITREEFEAFVAQQQXRFDAGAYIFSSDTGQGHLQQKSVRQTVLSEVVLERTELEISYAPRLDLNKEEILRKKLQLNPTQANRSRYQSRRVENMKAITTKRILQGLGHYLKSEGKVECYRTLHPVPLYSASVNRAFSSPKVAVEACNVVLKENFPTVASYCIIPEYDAYLDMVDGASCCLDTASFCPAKLRSFPKKHAYLEPTIRSAVPSAIQNTLQNVLAAATKRNCNVTQMRELPVLDSAAFNVECFKKYACNNEYWETYKKNPIRLTEENVVNYITKLKGPKAAALYAKTHNLDMLQDIPMDRFIMDLKRDVKVTPGTKHTEERPKVQVIQAADPLATAYLCGIHRELVRRLNAVLLPNIHTLFDMSAEDFDAIIAEHFQPGDWVLETDIASFDKSEDDAMALTALMILEDLGVDPELLTLIEAAFGEISSIHLPTKTKFRFGAMMKSGMFLTLFVNTVINMVIASRVLRERLTNSPCAAFIGDDNIVKGVKSDKLMADRCATWLNMEVKIIDAVVGEKAPYFCGGFILCDSVTGTACRVADPLKRLFKLGKPLAVDDEHDDDRRRALQEESARWNRVGIFSELCKAVESRYETVGTAVIIMAMTTLASSVESFSCLRGAPIALYG.

One can recognise an Alphavirus-like MT domain in the interval 28–259 (EAKQVTDNDH…EKRDLLRSWH (232 aa)). The nsP1 membrane-binding stretch occupies residues 244-263 (GSTIYHEKRDLLRSWHLPSV). Cys419 is lipidated: S-palmitoyl cysteine; by host. The (+)RNA virus helicase ATP-binding domain maps to 690 to 841 (ELVDPPFHEF…HEICTQVFHK (152 aa)). 721 to 728 (GVPGSGKS) is a binding site for a ribonucleoside 5'-triphosphate. The (+)RNA virus helicase C-terminal domain occupies 842–990 (SISRRCTKSV…MEEWQAEHDA (149 aa)). The 320-residue stretch at 1003–1322 (DVFQNKANVC…STLTNIYTGS (320 aa)) folds into the Peptidase C9 domain. Residues 1004 to 1023 (VFQNKANVCWAKALVPVLKT) are nucleolus localization signal. The For cysteine protease nsP2 activity role is filled by Cys1012. Residues 1056–1065 (VRFFGLDLDS) carry the Nuclear export signal motif. His1081 (for cysteine protease nsP2 activity) is an active-site residue. The short motif at 1179–1183 (SGKTV) is the Nuclear localization signal element. A Macro domain is found at 1328 to 1489 (GCAPSYHVVR…TLKEVVARRE (162 aa)). 6 residues coordinate ADP-D-ribose: Asp1339, Asn1353, Gly1361, Gly1441, Ile1442, and Phe1443. Residues Cys1596, Cys1598, Cys1621, and Cys1639 each coordinate Zn(2+). Disordered stretches follow at residues 1774–1806 (IPRPRVQSTSTDVDSISALESCDSTSDARSVDS) and 1827–1865 (APRTKFRTPPVPKPRARRPFHPLSSRSSSRSSLASNPPG). The segment at 1856–1877 (RSSLASNPPGVNRVITREEFEA) is binding to host FXR family members. In terms of domain architecture, RdRp catalytic spans 2254 to 2369 (DWVLETDIAS…KGVKSDKLMA (116 aa)).

As to quaternary structure, interacts with non-structural protein 3. Interacts with RNA-directed RNA polymerase nsP4. Interacts with protease nsP2. interacts with itself. In terms of assembly, interacts with mRNA-capping enzyme nsP1. Interacts with host DDX1. Interacts with host DDX3. Interacts (via C-terminus) with host FXR1; this interaction inhibits the formation of host stress granules on viral mRNAs and the nsp3-FXR1 complexes bind viral RNAs and probably orchestrate the assembly of viral replication complexes. Interacts (via C-terminus) with host FXR2; this interaction inhibits the formation of host stress granules on viral mRNAs and the nsp3-FXR2 complexes bind viral RNAs and probably orchestrate the assembly of viral replication complexes. Interacts (via C-terminus) with host FMR1; this interaction inhibits the formation of host stress granules on viral mRNAs and the nsp3-FMR1 complexes bind viral RNAs and probably orchestrate the assembly of viral replication complexes. Interacts with mRNA-capping enzyme nsP1. Interacts with protease nsP2. interacts with itself. As to quaternary structure, interacts with RNA-directed RNA polymerase nsP4. Interacts with mRNA-capping enzyme nsP1. Interacts with KPNA1/karyopherin-alpha1; this interaction probably allows the active transport of protease nsP2 into the host nucleus. It depends on Mg(2+) as a cofactor. The cofactor is Mn(2+). In terms of processing, specific enzymatic cleavages in vivo yield mature proteins. The processing of the polyprotein is temporally regulated. In early stages (1.7 hpi), P1234 is first cleaved in trans through its nsP2 protease activity, releasing P123' and nsP4, which associate to form the early replication complex. At the same time, P1234 is also cut at the nsP1/nsP2 site early in infection but with lower efficiency. After replication of the viral minus-strand RNAs (4 hpi), the polyproteins are cut at the nsP1/nsP2 and nsP2/nsP3 sites very efficiently, preventing accumulation of P123' and P1234 and allowing the formation of the late replication complex. NsP3'/nsP4 site is not cleaved anymore and P34 is produced rather than nsP4. Post-translationally, specific enzymatic cleavages in vivo yield mature proteins. The processing of the polyprotein is temporally regulated. In early stages (1.7 hpi), P123 is cleaved at the nsP1/nsP2 site with low efficiency. After replication of the viral minus-strand RNAs (4 hpi), the polyproteins are cut at the nsP1/nsP2 and nsP2/nsP3 sites very efficiently, preventing accumulation of P123 and allowing the formation of the late replication complex. Specific enzymatic cleavages in vivo yield mature proteins. The processing of the polyprotein is temporally regulated. In early stages (1.7 hpi), P123' is cleaved at the nsP1/nsP2 site with low efficiency. After replication of the viral minus-strand RNAs (4 hpi), the polyproteins are cut at the nsP1/nsP2 and nsP2/nsP3 sites very efficiently, preventing accumulation of P123' and allowing the formation of the late replication complex. In terms of processing, palmitoylated by host palmitoyltransferases ZDHHC2 and ZDHHC19. Post-translationally, phosphorylated by host on serines and threonines. Ubiquitinated; targets the protein for rapid degradation via the ubiquitin system. Nsp4 is present in extremely low quantities due to low frequency of translation through the amber stop-codon and the degradation by the ubiquitin pathway.

The protein localises to the host cytoplasmic vesicle membrane. The protein resides in the host cell membrane. It is found in the host cell projection. It localises to the host filopodium. Its subcellular location is the host nucleus. The protein localises to the host cytoplasm. The enzyme catalyses GTP + S-adenosyl-L-methionine = N(7)-methyl-GTP + S-adenosyl-L-homocysteine. The catalysed reaction is N(7)-methyl-GTP + L-histidyl-[protein] = N(tele)-(N(7)-methylguanosine 5'-phospho)-L-histidyl-[protein] + diphosphate. It catalyses the reaction N(tele)-(N(7)-methylguanosine 5'-phospho)-L-histidyl-[protein] + a 5'-end diphospho-(purine-ribonucleoside) in mRNA + H(+) = a 5'-end (N(7)-methyl 5'-triphosphoguanosine)-(purine-ribonucleoside) in mRNA + L-histidyl-[protein]. It carries out the reaction a 5'-end triphospho-ribonucleoside in mRNA + H2O = a 5'-end diphospho-ribonucleoside in mRNA + phosphate + H(+). The enzyme catalyses a ribonucleoside 5'-triphosphate + H2O = a ribonucleoside 5'-diphosphate + phosphate + H(+). The catalysed reaction is ATP + H2O = ADP + phosphate + H(+). It catalyses the reaction RNA(n) + a ribonucleoside 5'-triphosphate = RNA(n+1) + diphosphate. It carries out the reaction 4-O-(ADP-D-ribosyl)-L-aspartyl-[protein] + H2O = L-aspartyl-[protein] + ADP-D-ribose + H(+). The enzyme catalyses 5-O-(ADP-D-ribosyl)-L-glutamyl-[protein] + H2O = L-glutamyl-[protein] + ADP-D-ribose + H(+). The catalysed reaction is RNA(n) + ATP = RNA(n)-3'-adenine ribonucleotide + diphosphate. It catalyses the reaction ADP-alpha-D-ribose 1''-phosphate + H2O = ADP-D-ribose + phosphate. Its activity is regulated as follows. Inhibited by sinefungin. Its function is as follows. Inactive precursor of the viral replicase, which is activated by cleavages carried out by the viral protease nsP2. The early replication complex formed by the polyprotein P123 and nsP4 synthesizes the minus-strand RNAs (antigenome). Polyprotein P123 is a short-lived polyprotein that accumulates during early stage of infection. As soon P123 is cleaved into mature proteins, the plus-strand RNAs synthesis begins. Functionally, the early replication complex formed by the polyprotein P123' and nsP4 synthesizes minus-strand RNAs (antigenome). Polyprotein P123' is a short-lived polyprotein that accumulates during early stage of infection. As soon P123' is cleaved into mature proteins, the plus-strand RNAs synthesis begins. In terms of biological role, cytoplasmic capping enzyme that catalyzes two virus-specific reactions: methyltransferase and nsP1 guanylyltransferase. mRNA-capping is necessary since all viral RNAs are synthesized in the cytoplasm, and host capping enzymes are restricted to the nucleus. The enzymatic reaction involves a covalent link between 7-methyl-GMP and nsP1, whereas eukaryotic capping enzymes form a covalent complex only with GMP. NsP1 capping consists in the following reactions: GTP is first methylated into 7-methyl-GMP and then is covalently linked to nsP1 to form the m7GMp-nsP1 complex from which 7-methyl-GMP complex is transferred to the mRNA to create the cap structure. NsP1 is also needed for the initiation of the minus-strand RNAs synthesis. Probably serves as a membrane anchor for the replication complex composed of nsP1-nsP4. Nsp1 is needed for the initiation of the minus-strand RNAs synthesis. Palmitoylated nsP1 is remodeling host cell cytoskeleton, and induces filopodium-like structure formation at the surface of the host cell. Its function is as follows. Multifunctional protein whose N-terminus is part of the RNA polymerase complex and displays NTPase, RNA triphosphatase and helicase activities. NTPase and RNA triphosphatase are involved in viral RNA capping and helicase keeps a check on the dsRNA replication intermediates. The C-terminus harbors a protease that specifically cleaves the polyproteins and releases the mature proteins. Required for the shutoff of minus-strand RNAs synthesis. Inhibits host translation to ensure maximal viral gene expression and evade host immune response. Seems to be essential for minus-strand RNAs and subgenomic 26S mRNAs synthesis. Displays mono-ADP-ribosylhydrolase activity. ADP-ribosylation is a post-translational modification that controls various processes of the host cell and the virus probably needs to revert it for optimal viral replication. Binds proteins of FXR family and sequesters them into the viral RNA replication complexes thereby inhibiting the formation of host stress granules on viral mRNAs. The nsp3-FXR complexes bind viral RNAs and probably orchestrate the assembly of viral replication complexes, thanks to the ability of FXR family members to self-assemble and bind DNA. Functionally, seems to be essential for minus-strand RNAs and subgenomic 26S mRNAs synthesis. Displays mono-ADP-ribosylhydrolase activity. ADP-ribosylation is a post-translational modification that controls various processes of the host cell and the virus probably needs to revert it for optimal viral replication. Binds proteins of FXR family and sequesters them into the viral RNA replication complexes thereby inhibiting the formation of host stress granules on viral mRNAs. The nsp3'-FXR complexes bind viral RNAs and probably orchestrate the assembly of viral replication complexes, thanks to the ability of FXR family members to self-assemble and bind DNA. In terms of biological role, RNA dependent RNA polymerase. Replicates genomic and antigenomic RNA by recognizing replications specific signals. The early replication complex formed by the polyprotein P123 and nsP4 synthesizes minus-strand RNAs. The late replication complex composed of fully processed nsP1-nsP4 is responsible for the production of genomic and subgenomic plus-strand RNAs. In Venezuelan equine encephalitis virus (VEEV), this protein is Polyprotein P1234.